Reading from the N-terminus, the 957-residue chain is PE-PGRS family protein PE_PGRS3 (957 aa).

Residues 4 to 94 form the PE domain; it reads VIAAPEVIAA…GAYAAAEAAA (91 aa). A compositionally biased stretch (basic residues) spans 893–925; sequence CRRQRRADRQRRQRRQRRQSRGHARCRRHRRAA. Positions 893–957 are disordered; that stretch reads CRRQRRADRQ…GISCSPQMMP (65 aa).

It belongs to the mycobacterial PE family. PGRS subfamily. In terms of processing, a cleavage of the protein removes the N-terminal 120-150 residues, immediately upstream the PGRS domain. The exact position of the cleavage site could not be identified.

The protein resides in the cell outer membrane. It localises to the secreted. It is found in the cell wall. Its subcellular location is the cell surface. In terms of biological role, the arginine-rich C-terminal region protrudes from the mycobacterial membrane and mediates M.tuberculosis entry into host epithelial cells. May serve as a bridge between mycobacteria and host cells by interacting with specific host phospholipids and extracting them from host cells, for their direct integration or as a source of phosphate, during phases of TB pathogenesis when M.tuberculosis is short of phosphate supply. The protein is PE-PGRS family protein PE_PGRS3 of Mycobacterium tuberculosis (strain ATCC 25618 / H37Rv).